A 116-amino-acid chain; its full sequence is Nucleoid-associated protein SACE_0254 (116 aa).

The tract at residues leucine 90–leucine 116 is disordered. Residues alanine 101 to leucine 116 are compositionally biased toward gly residues.

It belongs to the YbaB/EbfC family. As to quaternary structure, homodimer.

Its subcellular location is the cytoplasm. It localises to the nucleoid. Binds to DNA and alters its conformation. May be involved in regulation of gene expression, nucleoid organization and DNA protection. The protein is Nucleoid-associated protein SACE_0254 of Saccharopolyspora erythraea (strain ATCC 11635 / DSM 40517 / JCM 4748 / NBRC 13426 / NCIMB 8594 / NRRL 2338).